Consider the following 101-residue polypeptide: Large ribosomal subunit protein uL23 (101 aa).

This sequence belongs to the universal ribosomal protein uL23 family. As to quaternary structure, part of the 50S ribosomal subunit. Contacts protein L29, and trigger factor when it is bound to the ribosome.

In terms of biological role, one of the early assembly proteins it binds 23S rRNA. One of the proteins that surrounds the polypeptide exit tunnel on the outside of the ribosome. Forms the main docking site for trigger factor binding to the ribosome. The sequence is that of Large ribosomal subunit protein uL23 from Paenarthrobacter aurescens (strain TC1).